A 490-amino-acid polypeptide reads, in one-letter code: Cytochrome P450 2C25 (490 aa).

Cys435 lines the heme pocket.

Belongs to the cytochrome P450 family. Heme serves as cofactor.

It is found in the endoplasmic reticulum membrane. The protein localises to the microsome membrane. The enzyme catalyses an organic molecule + reduced [NADPH--hemoprotein reductase] + O2 = an alcohol + oxidized [NADPH--hemoprotein reductase] + H2O + H(+). Catalyzes the hydroxylation of tolbutamide and the N-demethylation of aminopyrine and benzphetamine. Also has testosterone hydroxylase (16 beta) activity. The sequence is that of Cytochrome P450 2C25 (CYP2C25) from Mesocricetus auratus (Golden hamster).